The chain runs to 286 residues: Nucleotide-binding protein HAPS_0087 (286 aa).

Position 8 to 15 (8 to 15 (GRSGSGKS)) interacts with ATP. 56-59 (DVRN) contacts GTP.

It belongs to the RapZ-like family.

Functionally, displays ATPase and GTPase activities. This chain is Nucleotide-binding protein HAPS_0087, found in Glaesserella parasuis serovar 5 (strain SH0165) (Haemophilus parasuis).